A 361-amino-acid chain; its full sequence is Phospho-N-acetylmuramoyl-pentapeptide-transferase (361 aa).

Helical transmembrane passes span 28–48 (LAIIITLSISFVTGPILIKFL), 74–94 (TMGGIMIILSSCLSTLLLADL), 99–119 (IWITLFGFISFGIIGFMDDYA), 133–153 (SKFLLQGIISLIIYVLLEYLD), 168–188 (LSLDLNYFYMVFAIFVIVGSS), 203–223 (VPIAFTAGSFALISYLVGNLI), 236–256 (TGELTVLCAGLVGSCLGFLWF), 263–283 (VFMGDTGSLSLGGVLGIISVI), 288–308 (IVLAIIGGLFVIETTSVILQV), and 338–358 (KVVIRFWIISVIFSLIGLSSL).

The protein belongs to the glycosyltransferase 4 family. MraY subfamily. Mg(2+) is required as a cofactor.

It is found in the cell inner membrane. It catalyses the reaction UDP-N-acetyl-alpha-D-muramoyl-L-alanyl-gamma-D-glutamyl-meso-2,6-diaminopimeloyl-D-alanyl-D-alanine + di-trans,octa-cis-undecaprenyl phosphate = di-trans,octa-cis-undecaprenyl diphospho-N-acetyl-alpha-D-muramoyl-L-alanyl-D-glutamyl-meso-2,6-diaminopimeloyl-D-alanyl-D-alanine + UMP. It participates in cell wall biogenesis; peptidoglycan biosynthesis. Functionally, catalyzes the initial step of the lipid cycle reactions in the biosynthesis of the cell wall peptidoglycan: transfers peptidoglycan precursor phospho-MurNAc-pentapeptide from UDP-MurNAc-pentapeptide onto the lipid carrier undecaprenyl phosphate, yielding undecaprenyl-pyrophosphoryl-MurNAc-pentapeptide, known as lipid I. The sequence is that of Phospho-N-acetylmuramoyl-pentapeptide-transferase from Rickettsia prowazekii (strain Madrid E).